Here is a 981-residue protein sequence, read N- to C-terminus: Peroxisomal ATPase PEX6 (981 aa).

The residue at position 119 (R119) is an Omega-N-methylarginine. ATP is bound by residues 471 to 478 (GPPGSGKT) and 745 to 752 (GPPGTGKT).

This sequence belongs to the AAA ATPase family. As to quaternary structure, interacts with PEX1; forming the PEX1-PEX6 AAA ATPase complex, which is composed of a heterohexamer formed by a trimer of PEX1-PEX6 dimers. Interacts with PEX26; interaction is direct and promotes recruitment to peroxisomal membranes. Interacts with ZFAND6. In the teeth, expressed in ameloblasts and odontoblasts. Expressed in the retina, at higher levels in the ganglion cell layer and photoreceptor layer at the joint between the outer and inner segments.

The protein resides in the cytoplasm. The protein localises to the cytosol. It is found in the peroxisome membrane. Its subcellular location is the cell projection. It localises to the cilium. The protein resides in the photoreceptor outer segment. It catalyses the reaction ATP + H2O = ADP + phosphate + H(+). In terms of biological role, component of the PEX1-PEX6 AAA ATPase complex, a protein dislocase complex that mediates the ATP-dependent extraction of the PEX5 receptor from peroxisomal membranes, an essential step for PEX5 recycling. Specifically recognizes PEX5 monoubiquitinated at 'Cys-11', and pulls it out of the peroxisome lumen through the PEX2-PEX10-PEX12 retrotranslocation channel. Extraction by the PEX1-PEX6 AAA ATPase complex is accompanied by unfolding of the TPR repeats and release of bound cargo from PEX5. This is Peroxisomal ATPase PEX6 from Mus musculus (Mouse).